The chain runs to 88 residues: Small ribosomal subunit protein bS20 (88 aa).

The disordered stretch occupies residues 1–25; sequence MANSAQARKRARQATKARAHNASLR. The span at 7–19 shows a compositional bias: basic residues; sequence ARKRARQATKARA.

The protein belongs to the bacterial ribosomal protein bS20 family.

Its function is as follows. Binds directly to 16S ribosomal RNA. In Azoarcus sp. (strain BH72), this protein is Small ribosomal subunit protein bS20.